Reading from the N-terminus, the 468-residue chain is UDP-N-acetylmuramate--L-alanine ligase (468 aa).

112-118 (GTHGKTT) lines the ATP pocket.

This sequence belongs to the MurCDEF family.

Its subcellular location is the cytoplasm. The enzyme catalyses UDP-N-acetyl-alpha-D-muramate + L-alanine + ATP = UDP-N-acetyl-alpha-D-muramoyl-L-alanine + ADP + phosphate + H(+). Its pathway is cell wall biogenesis; peptidoglycan biosynthesis. Its function is as follows. Cell wall formation. This chain is UDP-N-acetylmuramate--L-alanine ligase, found in Bordetella avium (strain 197N).